Consider the following 979-residue polypeptide: Disks large-associated protein 3 (979 aa).

Basic and acidic residues predominate over residues 1 to 10 (MRGYHGDRGS). 6 disordered regions span residues 1-20 (MRGY…FADQ), 52-95 (AGLG…MYPG), 136-169 (FHTL…SPSR), 182-291 (AKSH…CLEG), 400-429 (AMGD…TRRS), and 537-581 (FRKA…RCSS). S58 carries the phosphoserine modification. A compositionally biased stretch (gly residues) spans 73-86 (PEGGPAGAGVGGGS). Positions 190–202 (PGKRDYNGPKAEG) are enriched in basic and acidic residues. Positions 203–218 (RGGSGGDSYPGPGSGG) are enriched in gly residues. A compositionally biased stretch (basic residues) spans 221-246 (TSHHHHHHHHHHHHQSRHGKRSKSKD). 4 positions are modified to phosphoserine: S406, S409, S412, and S416. Residues 540–549 (APPPIPPGSQ) show a composition bias toward pro residues. Phosphoserine occurs at positions 643 and 645. Disordered stretches follow at residues 741-790 (EGYP…RASP) and 908-940 (EEKK…DRQR). Basic and acidic residues-rich tracts occupy residues 769–779 (GRRDSWIERGS) and 927–940 (PVKE…DRQR). S932, S935, and S967 each carry phosphoserine.

This sequence belongs to the SAPAP family. As to quaternary structure, interacts with DLG4/PSD-95.

The protein localises to the cell membrane. It localises to the postsynaptic density. The protein resides in the synapse. Functionally, may play a role in the molecular organization of synapses and neuronal cell signaling. Could be an adapter protein linking ion channel to the subsynaptic cytoskeleton. May induce enrichment of PSD-95/SAP90 at the plasma membrane. The chain is Disks large-associated protein 3 (DLGAP3) from Homo sapiens (Human).